Consider the following 186-residue polypeptide: Large ribosomal subunit protein uL22 (186 aa).

A disordered region spans residues 159-186 (KAAENEPAKKKLSKKKLQRQKEKMMRNE). Basic and acidic residues predominate over residues 177 to 186 (RQKEKMMRNE).

Belongs to the universal ribosomal protein uL22 family.

This chain is Large ribosomal subunit protein uL22 (RpL17), found in Aedes albopictus (Asian tiger mosquito).